A 183-amino-acid chain; its full sequence is Efficient mitochondria targeting-associated protein 19 (183 aa).

At 1–25 (MKVVSLRRIYSSEIYKLPTTRLHMD) the chain is on the cytoplasmic side. Residues 24-156 (MDTLYYYYFV…PYLAIPLWMA (133 aa)) enclose the EXPERA domain. A helical transmembrane segment spans residues 26-46 (TLYYYYFVSHLAAALFVDLPI). Residues 47–81 (TEWLGGSLSCLSGLRRFYLSTYEDPILLIPAPWKT) are Lumenal-facing. A helical transmembrane segment spans residues 82-102 (ALFSSELFFQVPFFIWVSLRL). At 103 to 110 (RKKARDPV) the chain is on the cytoplasmic side. Residues 111–131 (LWVAILIYGVHAFTTTWCCMF) form a helical membrane-spanning segment. Residues 132-138 (ELFAEKK) are Lumenal-facing. Residues 139 to 159 (WMIMSFYFPYLAIPLWMAIDM) traverse the membrane as a helical segment. Topologically, residues 160–183 (GGRLVKSCHAAKSGPSSTITSKSD) are cytoplasmic.

Belongs to the TMEM97/sigma-2 receptor family.

The protein resides in the endoplasmic reticulum membrane. Part of an import route for newly synthesized mitochondrial proteins termed the ER-SURF pathway (ER surface-mediated protein targeting), which retrieves mitochondrial precursor proteins from the ER surface and reroutes them to mitochondria for efficient mitochondrial import. Acts as a quality control factor in the ER, promoting the proteolytic degradation of nonproductive and extramitochondrial precursor proteins in the ER membrane thus removing them from the ER surface. This chain is Efficient mitochondria targeting-associated protein 19 (ema19), found in Schizosaccharomyces pombe (strain 972 / ATCC 24843) (Fission yeast).